Consider the following 147-residue polypeptide: UPF0260 protein CJA_2436 (147 aa).

It belongs to the UPF0260 family.

The polypeptide is UPF0260 protein CJA_2436 (Cellvibrio japonicus (strain Ueda107) (Pseudomonas fluorescens subsp. cellulosa)).